The primary structure comprises 200 residues: Putative 3-methyladenine DNA glycosylase (200 aa).

Belongs to the DNA glycosylase MPG family.

This chain is Putative 3-methyladenine DNA glycosylase, found in Rhodopseudomonas palustris (strain BisB18).